The primary structure comprises 545 residues: Probable protein kinase UbiB (545 aa).

One can recognise a Protein kinase domain in the interval 124-502; it reads DFDETPLASA…RRSQGLARFY (379 aa). ATP is bound by residues 130 to 138 and Lys-153; that span reads LASASIAQV. The Proton acceptor role is filled by Asp-288. Transmembrane regions (helical) follow at residues 498–517 and 521–540; these read LARF…AILF and VETI…LLGW.

This sequence belongs to the ABC1 family. UbiB subfamily.

It is found in the cell inner membrane. The protein operates within cofactor biosynthesis; ubiquinone biosynthesis [regulation]. Its function is as follows. Is probably a protein kinase regulator of UbiI activity which is involved in aerobic coenzyme Q (ubiquinone) biosynthesis. The chain is Probable protein kinase UbiB from Photobacterium profundum (strain SS9).